Reading from the N-terminus, the 235-residue chain is Large ribosomal subunit protein uL3 (235 aa).

This sequence belongs to the universal ribosomal protein uL3 family. In terms of assembly, part of the 50S ribosomal subunit. Forms a cluster with proteins L14 and L19.

Its function is as follows. One of the primary rRNA binding proteins, it binds directly near the 3'-end of the 23S rRNA, where it nucleates assembly of the 50S subunit. This Frankia casuarinae (strain DSM 45818 / CECT 9043 / HFP020203 / CcI3) protein is Large ribosomal subunit protein uL3.